Here is a 143-residue protein sequence, read N- to C-terminus: Probable cyclic pyranopterin monophosphate synthase (143 aa).

Residues 61–63 and 97–98 contribute to the substrate site; these read MCH and ME. Aspartate 112 is a catalytic residue.

It belongs to the MoaC family. Homohexamer; trimer of dimers.

The enzyme catalyses (8S)-3',8-cyclo-7,8-dihydroguanosine 5'-triphosphate = cyclic pyranopterin phosphate + diphosphate. Its pathway is cofactor biosynthesis; molybdopterin biosynthesis. Functionally, catalyzes the conversion of (8S)-3',8-cyclo-7,8-dihydroguanosine 5'-triphosphate to cyclic pyranopterin monophosphate (cPMP). The chain is Probable cyclic pyranopterin monophosphate synthase from Sulfolobus acidocaldarius (strain ATCC 33909 / DSM 639 / JCM 8929 / NBRC 15157 / NCIMB 11770).